We begin with the raw amino-acid sequence, 351 residues long: N-acetyl-gamma-glutamyl-phosphate reductase (351 aa).

C154 is a catalytic residue.

It belongs to the NAGSA dehydrogenase family. Type 1 subfamily.

It localises to the cytoplasm. The enzyme catalyses N-acetyl-L-glutamate 5-semialdehyde + phosphate + NADP(+) = N-acetyl-L-glutamyl 5-phosphate + NADPH + H(+). It functions in the pathway amino-acid biosynthesis; L-arginine biosynthesis; N(2)-acetyl-L-ornithine from L-glutamate: step 3/4. Functionally, catalyzes the NADPH-dependent reduction of N-acetyl-5-glutamyl phosphate to yield N-acetyl-L-glutamate 5-semialdehyde. The protein is N-acetyl-gamma-glutamyl-phosphate reductase of Prochlorococcus marinus (strain AS9601).